The primary structure comprises 211 residues: Ribonuclease HII (211 aa).

An RNase H type-2 domain is found at 21 to 211; sequence SSIAGLDEAG…APLKSMFDVI (191 aa). Asp-27, Glu-28, and Asp-122 together coordinate a divalent metal cation.

It belongs to the RNase HII family. Mn(2+) is required as a cofactor. It depends on Mg(2+) as a cofactor.

It is found in the cytoplasm. It carries out the reaction Endonucleolytic cleavage to 5'-phosphomonoester.. Functionally, endonuclease that specifically degrades the RNA of RNA-DNA hybrids. The polypeptide is Ribonuclease HII (Dehalococcoides mccartyi (strain ATCC BAA-2266 / KCTC 15142 / 195) (Dehalococcoides ethenogenes (strain 195))).